The sequence spans 566 residues: Proline--tRNA ligase (566 aa).

It belongs to the class-II aminoacyl-tRNA synthetase family. ProS type 1 subfamily. Homodimer.

It is found in the cytoplasm. The enzyme catalyses tRNA(Pro) + L-proline + ATP = L-prolyl-tRNA(Pro) + AMP + diphosphate. Functionally, catalyzes the attachment of proline to tRNA(Pro) in a two-step reaction: proline is first activated by ATP to form Pro-AMP and then transferred to the acceptor end of tRNA(Pro). As ProRS can inadvertently accommodate and process non-cognate amino acids such as alanine and cysteine, to avoid such errors it has two additional distinct editing activities against alanine. One activity is designated as 'pretransfer' editing and involves the tRNA(Pro)-independent hydrolysis of activated Ala-AMP. The other activity is designated 'posttransfer' editing and involves deacylation of mischarged Ala-tRNA(Pro). The misacylated Cys-tRNA(Pro) is not edited by ProRS. This is Proline--tRNA ligase from Bacillus cereus (strain Q1).